Consider the following 408-residue polypeptide: Phosphoenolpyruvate/phosphate translocator 1, chloroplastic (408 aa).

The N-terminal 66 residues, 1-66 (MQSAAAVGLL…ISARRIGLVP (66 aa)), are a transit peptide targeting the chloroplast. The next 7 membrane-spanning stretches (helical) occupy residues 105–125 (TLQL…FNIY), 139–159 (ITNV…ITGI), 165–185 (ISGA…MGNL), 222–242 (PTPF…LASL), 245–262 (ASFN…NVTF), 283–303 (ITLF…VTLL), and 375–395 (TPVS…VFLY). The 118-residue stretch at 124 to 241 (IYNKQVLKVF…PIVGGVALAS (118 aa)) folds into the EamA domain.

Belongs to the TPT transporter family. PPT (TC 2.A.7.9) subfamily.

It localises to the plastid. It is found in the chloroplast membrane. Its function is as follows. Phosphoenolpyruvate/phosphate translocator that transports phosphoenolpyruvate (PEP) and dihydroxyacetone phosphate. This is Phosphoenolpyruvate/phosphate translocator 1, chloroplastic (PPT1) from Oryza sativa subsp. japonica (Rice).